The sequence spans 66 residues: Venom peptide CtAPI (66 aa).

Intrachain disulfides connect Cys7-Cys44, Cys16-Cys40, Cys20-Cys33, Cys24-Cys64, and Cys46-Cys58. Positions 7-64 (CEKDEEFVNCAPRCPQNCRNIRSYQPCLVLTPVCAPGCVCRSGKVKNDRGDCVSITDC) constitute a TIL domain.

This sequence belongs to the serine protease inhibitor-like (TIL domain-containing) family. Expressed by the venom gland.

It localises to the secreted. In terms of biological role, serine protease inhibitor. The polypeptide is Venom peptide CtAPI (Chaerilus tricostatus (Scorpion)).